The sequence spans 585 residues: Pyruvate kinase (585 aa).

Arg32 lines the substrate pocket. 4 residues coordinate K(+): Asn34, Ser36, Asp66, and Thr67. 34–37 (NFSH) lines the ATP pocket. Residues Arg73 and Lys156 each coordinate ATP. Mg(2+) is bound at residue Glu221. Residues Gly244, Asp245, and Thr277 each coordinate substrate. Position 245 (Asp245) interacts with Mg(2+).

The protein belongs to the pyruvate kinase family. In the C-terminal section; belongs to the PEP-utilizing enzyme family. Mg(2+) serves as cofactor. Requires K(+) as cofactor.

It catalyses the reaction pyruvate + ATP = phosphoenolpyruvate + ADP + H(+). Its pathway is carbohydrate degradation; glycolysis; pyruvate from D-glyceraldehyde 3-phosphate: step 5/5. The sequence is that of Pyruvate kinase (pyk) from Staphylococcus epidermidis (strain ATCC 35984 / DSM 28319 / BCRC 17069 / CCUG 31568 / BM 3577 / RP62A).